The primary structure comprises 254 residues: Leucyl/phenylalanyl-tRNA--protein transferase (254 aa).

Belongs to the L/F-transferase family.

The protein resides in the cytoplasm. The enzyme catalyses N-terminal L-lysyl-[protein] + L-leucyl-tRNA(Leu) = N-terminal L-leucyl-L-lysyl-[protein] + tRNA(Leu) + H(+). It carries out the reaction N-terminal L-arginyl-[protein] + L-leucyl-tRNA(Leu) = N-terminal L-leucyl-L-arginyl-[protein] + tRNA(Leu) + H(+). The catalysed reaction is L-phenylalanyl-tRNA(Phe) + an N-terminal L-alpha-aminoacyl-[protein] = an N-terminal L-phenylalanyl-L-alpha-aminoacyl-[protein] + tRNA(Phe). In terms of biological role, functions in the N-end rule pathway of protein degradation where it conjugates Leu, Phe and, less efficiently, Met from aminoacyl-tRNAs to the N-termini of proteins containing an N-terminal arginine or lysine. This chain is Leucyl/phenylalanyl-tRNA--protein transferase, found in Burkholderia vietnamiensis (strain G4 / LMG 22486) (Burkholderia cepacia (strain R1808)).